A 305-amino-acid chain; its full sequence is MNKTDKLLESLNVFIQKAEENQYKQLGEMVPDFPGKSNIPKYVEEYEKGIARLLRRQHKKFLDGLKGFVSKDSEETLKALLVFFTQNLFAEDDFEEEFQELTEGFLQQTIEEMAEVIMDSIDPEVPFKVLSNRTINWIKDWSKKLAEIMKLNTHEVVEDVLTNAIENGSSIQDIELTLKDMPQFDRERARTTAITEVLAASSAAQHESYAQSPAVKKKKWRHSGGKKNNPRENHIDLDGTVIGVDEEFQIPGSSETCMFPRDPKLSTRERVNCHCVLSPVVDSKILGLSPEEKEEIQREVLANME.

The interval 208–236 (SYAQSPAVKKKKWRHSGGKKNNPRENHID) is disordered. Basic residues predominate over residues 215-225 (VKKKKWRHSGG).

This is an uncharacterized protein from Bacillus subtilis (strain 168).